The primary structure comprises 278 residues: Checkpoint protein Hus1-like (278 aa).

It belongs to the HUS1 family. In terms of assembly, component of the 9-1-1 checkpoint clamp complex consisting of Rad9 isoform A, Rad1 and Hus1-like; the interactions with Rad1 and Rad9 are direct. This complex probably also forms with Rad9 isoform B, however 9-1-1 complex containing Rad9 isoform A localizes to the nuclear periphery. Expressed in ovary.

The protein resides in the cytoplasm. Its subcellular location is the nucleus envelope. Its function is as follows. Component of the 9-1-1 checkpoint clamp complex. Involved in both meiotic and somatic DNA damage responses. Essential for activation of the meiotic checkpoint in response to double-strand DNA breaks; required for the S-phase checkpoint but not the G2-M phase checkpoint. Involved in double strand break repair by homologous recombination during meiosis; influences the organization of chromosomal DNA in the meiotic nucleus. In Drosophila melanogaster (Fruit fly), this protein is Checkpoint protein Hus1-like.